The following is a 124-amino-acid chain: Fluoride-specific ion channel FluC (124 aa).

Transmembrane regions (helical) follow at residues 4-24 (ILFVALGGSIGAVFRYLISIF), 35-55 (FGTLLVNIIGSFLMGVIYALG), 70-90 (VGLLGALTTFSTFSNETLLLI), and 95-115 (WLKAFLNIALNLCLCIFMVYL). Residues Gly74 and Thr77 each coordinate Na(+).

This sequence belongs to the fluoride channel Fluc/FEX (TC 1.A.43) family.

It is found in the cell inner membrane. It carries out the reaction fluoride(in) = fluoride(out). Na(+) is not transported, but it plays an essential structural role and its presence is essential for fluoride channel function. Fluoride-specific ion channel. Important for reducing fluoride concentration in the cell, thus reducing its toxicity. This is Fluoride-specific ion channel FluC from Shewanella woodyi (strain ATCC 51908 / MS32).